A 316-amino-acid polypeptide reads, in one-letter code: Probable cell division protein WhiA (316 aa).

The segment at residues 275-309 (TLKELGEMVSSGKISKSGINHRLRKLDEIAEQLRS) is a DNA-binding region (H-T-H motif).

The protein belongs to the WhiA family.

Functionally, involved in cell division and chromosome segregation. The sequence is that of Probable cell division protein WhiA from Bacillus licheniformis (strain ATCC 14580 / DSM 13 / JCM 2505 / CCUG 7422 / NBRC 12200 / NCIMB 9375 / NCTC 10341 / NRRL NRS-1264 / Gibson 46).